The following is a 1107-amino-acid chain: RNA-dependent RNA polymerase 1 (1107 aa).

The protein belongs to the RdRP family.

The enzyme catalyses RNA(n) + a ribonucleoside 5'-triphosphate = RNA(n+1) + diphosphate. Functionally, RNA-dependent direct polymerase involved in antiviral silencing. Required for the production of some small RNAs (mainly 21 and some 22 nucleotides) derived from the crucifer-infecting tobamovirus (TMV-cg). Required for turnip mosaic virus (TuMV) silencing and accumulation of viral siRNAs. Involved in cucumber mosaic virus (CMV) silencing. Required for the biogenesis of viral secondary siRNAs, process that follows the production of primary siRNAs derived from viral RNA replication. Specifically targets the positive-strand of the 3 RNA genomes of CMV and preferentially amplifies the 5'-terminal siRNAs of each viral genomic RNA. Not involved in the production of siRNAs derived from a single-stranded 336-nucleotide satellite RNA of CMV. The protein is RNA-dependent RNA polymerase 1 (RDR1) of Arabidopsis thaliana (Mouse-ear cress).